We begin with the raw amino-acid sequence, 986 residues long: MAGIFYFALFSCLFGICDAVTGSRVYPANEVTLLDSRSVQGELGWIASPLEGGWEEVSIMDEKNTPIRTYQVCNVMEPSQNNWLRTDWITREGAQRVYIEIKFTLRDCNSLPGVMGTCKETFNLYYYESDNDKERFIRENQFVKIDTIAADESFTQVDIGDRIMKLNTEIRDVGPLSKKGFYLAFQDVGACIALVSVRVFYKKCPLTVRNLAQFPDTITGADTSSLVEVRGSCVNNSEEKDVPKMYCGADGEWLVPIGNCLCNAGHEERSGECQACKIGYYKALSTDATCAKCPPHSYSVWEGATSCTCDRGFFRADNDAASMPCTRPPSAPLNLISNVNETSVNLEWSSPQNTGGRQDISYNVVCKKCGAGDPSKCRPCGSGVHYTPQQNGLKTTKVSITDLLAHTNYTFEIWAVNGVSKYNPNPDQSVSVTVTTNQAAPSSIALVQAKEVTRYSVALAWLEPDRPNGVILEYEVKYYEKDQNERSYRIVRTAARNTDIKGLNPLTSYVFHVRARTAAGYGDFSEPLEVTTNTVPSRIIGDGANSTVLLVSVSGSVVLVVILIAAFVISRRRSKYSKAKQEADEEKHLNQGVRTYVDPFTYEDPNQAVREFAKEIDASCIKIEKVIGVGEFGEVCSGRLKVPGKREICVAIKTLKAGYTDKQRRDFLSEASIMGQFDHPNIIHLEGVVTKCKPVMIITEYMENGSLDAFLRKNDGRFTVIQLVGMLRGIGSGMKYLSDMSYVHRDLAARNILVNSNLVCKVSDFGMSRVLEDDPEAAYTTRGGKIPIRWTAPEAIAYRKFTSASDVWSYGIVMWEVMSYGERPYWDMSNQDVIKAIEEGYRLPPPMDCPIALHQLMLDCWQKERSDRPKFGQIVNMLDKLIRNPNSLKRTGTESSRPNTALLDPSSPEFSAVVSVGDWLQAIKMDRYKDNFTAAGYTTLEAVVHVNQEDLARIGITAITHQNKILSSVQAMRTQMQQMHGRMVPV.

An N-terminal signal peptide occupies residues 1-19; that stretch reads MAGIFYFALFSCLFGICDA. The Extracellular portion of the chain corresponds to 20–547; sequence VTGSRVYPAN…RIIGDGANST (528 aa). Positions 30–209 constitute an Eph LBD domain; that stretch reads EVTLLDSRSV…FYKKCPLTVR (180 aa). N-linked (GlcNAc...) asparagine glycosylation is found at Asn-235, Asn-340, and Asn-408. Fibronectin type-III domains are found at residues 328 to 439 and 440 to 537; these read PPSA…TNQA and APSS…TVPS. Residue Asn-545 is glycosylated (N-linked (GlcNAc...) asparagine). A helical transmembrane segment spans residues 548 to 569; it reads VLLVSVSGSVVLVVILIAAFVI. At 570–986 the chain is on the cytoplasmic side; sequence SRRRSKYSKA…QQMHGRMVPV (417 aa). Tyr-596 and Tyr-602 each carry phosphotyrosine; by autocatalysis. One can recognise a Protein kinase domain in the interval 621 to 882; the sequence is IKIEKVIGVG…QIVNMLDKLI (262 aa). Residues 627–635 and Lys-653 each bind ATP; that span reads IGVGEFGEV. Residue Asp-746 is the Proton acceptor of the active site. Tyr-779 and Tyr-928 each carry phosphotyrosine; by autocatalysis. Residues 911 to 975 enclose the SAM domain; it reads SAVVSVGDWL…LSSVQAMRTQ (65 aa). Positions 984–986 match the PDZ-binding motif; sequence VPV.

This sequence belongs to the protein kinase superfamily. Tyr protein kinase family. Ephrin receptor subfamily. In terms of assembly, heterotetramer upon binding of the ligand. The heterotetramer is composed of an ephrin dimer and a receptor dimer. Oligomerization is probably required to induce biological responses. Interacts (phosphorylated at position Tyr-602) with FYN. Interacts with CDK5, CDK5R1 and NGEF; upon activation by EFNA1 induces NGEF phosphorylation by the kinase CDK5. Interacts with CHN1; effector of EPHA4 in axon guidance linking EPHA4 activation to RAC1 regulation. Interacts (via PDZ motif) with SIPA1L1 (via PDZ domain); controls neuronal morphology through regulation of the RAP1 (RAP1A or RAP1B) and RAP2 (RAP2A, RAP2B or RAP2C) GTPases. Forms a ternary complex composed of ADAM10, CADH1 and EPHA4; within the complex, CADH1 is cleaved by ADAM10 which disrupts adherens junctions. Ubiquitous.

Its subcellular location is the cell membrane. It localises to the cell projection. The protein localises to the axon. It is found in the dendrite. The protein resides in the postsynaptic density membrane. Its subcellular location is the early endosome. It localises to the cell junction. The protein localises to the adherens junction. The catalysed reaction is L-tyrosyl-[protein] + ATP = O-phospho-L-tyrosyl-[protein] + ADP + H(+). Its function is as follows. Receptor tyrosine kinase which binds membrane-bound ephrin family ligands residing on adjacent cells, leading to contact-dependent bidirectional signaling into neighboring cells. The signaling pathway downstream of the receptor is referred to as forward signaling while the signaling pathway downstream of the ephrin ligand is referred to as reverse signaling. Highly promiscuous, it has the unique property among Eph receptors to bind and to be physiologically activated by both GPI-anchored ephrin-A and transmembrane ephrin-B ligands including EFNA1 and EFNB3. Upon activation by ephrin ligands, modulates cell morphology and integrin-dependent cell adhesion through regulation of the Rac, Rap and Rho GTPases activity. Plays an important role in the development of the nervous system controlling different steps of axonal guidance including the establishment of the corticospinal projections. May also control the segregation of motor and sensory axons during neuromuscular circuit development. In addition to its role in axonal guidance plays a role in synaptic plasticity. Activated by EFNA1 phosphorylates CDK5 at 'Tyr-15' which in turn phosphorylates NGEF regulating RHOA and dendritic spine morphogenesis. In the nervous system, also plays a role in repair after injury preventing axonal regeneration and in angiogenesis playing a role in central nervous system vascular formation. Additionally, its promiscuity makes it available to participate in a variety of cell-cell signaling regulating for instance the development of the thymic epithelium. During development of the cochlear organ of Corti, regulates pillar cell separation by forming a ternary complex with ADAM10 and CADH1 which facilitates the cleavage of CADH1 by ADAM10 and disruption of adherens junctions. Phosphorylates CAPRIN1, promoting CAPRIN1-dependent formation of a membraneless compartment. In Homo sapiens (Human), this protein is Ephrin type-A receptor 4 (EPHA4).